The chain runs to 351 residues: Uroporphyrinogen decarboxylase (351 aa).

Substrate contacts are provided by residues 25–29 (RQAGR), Asp-74, Tyr-151, Ser-206, and His-325.

Belongs to the uroporphyrinogen decarboxylase family. As to quaternary structure, homodimer.

The protein localises to the cytoplasm. The enzyme catalyses uroporphyrinogen III + 4 H(+) = coproporphyrinogen III + 4 CO2. It functions in the pathway porphyrin-containing compound metabolism; protoporphyrin-IX biosynthesis; coproporphyrinogen-III from 5-aminolevulinate: step 4/4. Its function is as follows. Catalyzes the decarboxylation of four acetate groups of uroporphyrinogen-III to yield coproporphyrinogen-III. The sequence is that of Uroporphyrinogen decarboxylase from Chlorobaculum parvum (strain DSM 263 / NCIMB 8327) (Chlorobium vibrioforme subsp. thiosulfatophilum).